The sequence spans 61 residues: Large ribosomal subunit protein uL30 (61 aa).

This sequence belongs to the universal ribosomal protein uL30 family. As to quaternary structure, part of the 50S ribosomal subunit.

This chain is Large ribosomal subunit protein uL30, found in Treponema denticola (strain ATCC 35405 / DSM 14222 / CIP 103919 / JCM 8153 / KCTC 15104).